A 219-amino-acid polypeptide reads, in one-letter code: N-(5'-phosphoribosyl)anthranilate isomerase (219 aa).

Belongs to the TrpF family.

The enzyme catalyses N-(5-phospho-beta-D-ribosyl)anthranilate = 1-(2-carboxyphenylamino)-1-deoxy-D-ribulose 5-phosphate. It functions in the pathway amino-acid biosynthesis; L-tryptophan biosynthesis; L-tryptophan from chorismate: step 3/5. The chain is N-(5'-phosphoribosyl)anthranilate isomerase from Chloroherpeton thalassium (strain ATCC 35110 / GB-78).